We begin with the raw amino-acid sequence, 350 residues long: Chorismate synthase (350 aa).

R48 contacts NADP(+). FMN-binding positions include 125 to 127, G277, 292 to 296, and R318; these read RSS and KPIPS.

Belongs to the chorismate synthase family. As to quaternary structure, homotetramer. Requires FMNH2 as cofactor.

It carries out the reaction 5-O-(1-carboxyvinyl)-3-phosphoshikimate = chorismate + phosphate. The protein operates within metabolic intermediate biosynthesis; chorismate biosynthesis; chorismate from D-erythrose 4-phosphate and phosphoenolpyruvate: step 7/7. In terms of biological role, catalyzes the anti-1,4-elimination of the C-3 phosphate and the C-6 proR hydrogen from 5-enolpyruvylshikimate-3-phosphate (EPSP) to yield chorismate, which is the branch point compound that serves as the starting substrate for the three terminal pathways of aromatic amino acid biosynthesis. This reaction introduces a second double bond into the aromatic ring system. The polypeptide is Chorismate synthase (Maridesulfovibrio salexigens (strain ATCC 14822 / DSM 2638 / NCIMB 8403 / VKM B-1763) (Desulfovibrio salexigens)).